Reading from the N-terminus, the 41-residue chain is MNDFQKYLSTAPVLLTLWMTFTAGFIIEVNRFFPDMLGLYF.

The helical transmembrane segment at 7–27 (YLSTAPVLLTLWMTFTAGFII) threads the bilayer.

The protein belongs to the PsaJ family.

The protein localises to the plastid. Its subcellular location is the chloroplast thylakoid membrane. In terms of biological role, may help in the organization of the PsaE and PsaF subunits. The chain is Photosystem I reaction center subunit IX from Thalassiosira pseudonana (Marine diatom).